We begin with the raw amino-acid sequence, 626 residues long: Polypeptide N-acetylgalactosaminyltransferase 5 (626 aa).

The Cytoplasmic segment spans residues 1 to 11 (MIIFKKKAILK). Residues 12 to 31 (VLLLVPVFWICSLIFFAATS) form a helical; Signal-anchor for type II membrane protein membrane-spanning segment. A glycan (N-linked (GlcNAc...) asparagine) is linked at N32. The Lumenal portion of the chain corresponds to 32-626 (NDSSQIGSNN…AIEHGAKPPS (595 aa)). Disulfide bonds link C165/C399, C390/C466, C502/C521, C544/C557, and C583/C598. Residues 174–284 (LPRTSVIICF…EGWMEPLLDR (111 aa)) are catalytic subdomain A. 2 residues coordinate substrate: D215 and R245. D268 contacts Mn(2+). S269 is a substrate binding site. H270 contacts Mn(2+). A glycan (N-linked (GlcNAc...) asparagine) is linked at N338. Residues 345-407 (PVRSPTMAGG…PCSHVGHVFR (63 aa)) are catalytic subdomain B. W376 lines the substrate pocket. H404 is a binding site for Mn(2+). 2 residues coordinate substrate: R407 and Y412. The 123-residue stretch at 488–610 (AKGEVRNSAV…DDPYQHWKFK (123 aa)) folds into the Ricin B-type lectin domain.

The protein belongs to the glycosyltransferase 2 family. GalNAc-T subfamily. The cofactor is Mn(2+).

It is found in the golgi apparatus membrane. The catalysed reaction is L-seryl-[protein] + UDP-N-acetyl-alpha-D-galactosamine = a 3-O-[N-acetyl-alpha-D-galactosaminyl]-L-seryl-[protein] + UDP + H(+). It catalyses the reaction L-threonyl-[protein] + UDP-N-acetyl-alpha-D-galactosamine = a 3-O-[N-acetyl-alpha-D-galactosaminyl]-L-threonyl-[protein] + UDP + H(+). It functions in the pathway protein modification; protein glycosylation. Its function is as follows. Catalyzes the initial reaction in O-linked oligosaccharide biosynthesis, the transfer of an N-acetyl-D-galactosamine residue to a serine or threonine residue on the protein receptor. The protein is Polypeptide N-acetylgalactosaminyltransferase 5 (gly-5) of Caenorhabditis elegans.